The primary structure comprises 380 residues: Dynactin subunit 2 (380 aa).

The disordered stretch occupies residues 1–40 (MADPKFQNLPGIAYDQPDVYETPDDPETDTSDYYEEEPEN). Residues 21–40 (ETPDDPETDTSDYYEEEPEN) show a composition bias toward acidic residues. 2 coiled-coil regions span residues 100 to 135 (VQKC…QSYD) and 353 to 377 (ETFA…TAIS).

Belongs to the dynactin subunit 2 family. As to quaternary structure, subunit of dynactin, a multiprotein complex associated with dynein.

It localises to the cytoplasm. The protein localises to the cytoskeleton. The protein resides in the membrane. Functionally, modulates cytoplasmic dynein binding to an organelle, and plays a role in prometaphase chromosome alignment and spindle organization during mitosis. May play a role in synapse formation during brain development. The sequence is that of Dynactin subunit 2 from Drosophila pseudoobscura pseudoobscura (Fruit fly).